Here is a 572-residue protein sequence, read N- to C-terminus: MSKLIKGIAASDGVAIAKAYLLVEPDLTFDKNEKVTDVEGEVAKFNSAIEASKVELTKIRNNAEVQLGADKAAIFDAHLLVLDDPELIQPIQDKIKNENANAATALTDVTTQFVTIFESMDNEYMKERAADIRDVSKRVLSHILGVELPNPSMIDESVVIVGNDLTPSDTAQLNKEFVQGFATNIGGRTSHSAIMSRSLEIPAIVGTKSITQEVKQGDIIIVDGLNGDVIVNPTEDELIAYQDKRECYFADKKELQKLRDADTVTVDGVHAELAANIGTPNDLPGVIENGAQGIGLYRTEFLYMGRDQMPTEEEQFEAYKEVLEAMDGKRVVVRTLDIGGDKELSYLNLPEEMNPFLGYRAIRLCLAQQDIFRPQLRALLRASVYGKLNIMFPMVATINEFREAKAILLEEKENLKNEGHDISDDIELGIMVEIPATAALADVFAKEVDFFSIGTNDLIQYTLAADRMSERVSYLYQPYNPSILRLVKQVIEASHKEGKWTGMCGEMAGDETAIPLLLGLGLDEFSMSATSILKARRQINGLSKNEMTELANRAVDCATQEEVIELVNNYVK.

H191 serves as the catalytic Tele-phosphohistidine intermediate. Phosphoenolpyruvate contacts are provided by R298 and R334. 2 residues coordinate Mg(2+): E433 and D457. Residues 456 to 457 (ND) and R467 contribute to the phosphoenolpyruvate site. The Proton donor role is filled by C504.

The protein belongs to the PEP-utilizing enzyme family. Homodimer. It depends on Mg(2+) as a cofactor.

It is found in the cytoplasm. It carries out the reaction L-histidyl-[protein] + phosphoenolpyruvate = N(pros)-phospho-L-histidyl-[protein] + pyruvate. In terms of biological role, general (non sugar-specific) component of the phosphoenolpyruvate-dependent sugar phosphotransferase system (sugar PTS). This major carbohydrate active-transport system catalyzes the phosphorylation of incoming sugar substrates concomitantly with their translocation across the cell membrane. Enzyme I transfers the phosphoryl group from phosphoenolpyruvate (PEP) to the phosphoryl carrier protein (HPr). The sequence is that of Phosphoenolpyruvate-protein phosphotransferase (ptsI) from Staphylococcus aureus (strain Mu50 / ATCC 700699).